The sequence spans 79 residues: ATP synthase subunit c (79 aa).

Transmembrane regions (helical) follow at residues 7–27 (VSGMAALGAGIAALACIGAGI) and 56–76 (IGSAFSEATAIYGLIIALFLI).

The protein belongs to the ATPase C chain family. In terms of assembly, F-type ATPases have 2 components, F(1) - the catalytic core - and F(0) - the membrane proton channel. F(1) has five subunits: alpha(3), beta(3), gamma(1), delta(1), epsilon(1). F(0) has three main subunits: a(1), b(2) and c(10-14). The alpha and beta chains form an alternating ring which encloses part of the gamma chain. F(1) is attached to F(0) by a central stalk formed by the gamma and epsilon chains, while a peripheral stalk is formed by the delta and b chains.

It localises to the cell membrane. F(1)F(0) ATP synthase produces ATP from ADP in the presence of a proton or sodium gradient. F-type ATPases consist of two structural domains, F(1) containing the extramembraneous catalytic core and F(0) containing the membrane proton channel, linked together by a central stalk and a peripheral stalk. During catalysis, ATP synthesis in the catalytic domain of F(1) is coupled via a rotary mechanism of the central stalk subunits to proton translocation. In terms of biological role, key component of the F(0) channel; it plays a direct role in translocation across the membrane. A homomeric c-ring of between 10-14 subunits forms the central stalk rotor element with the F(1) delta and epsilon subunits. In Clostridium botulinum (strain Hall / ATCC 3502 / NCTC 13319 / Type A), this protein is ATP synthase subunit c.